Here is a 317-residue protein sequence, read N- to C-terminus: tRNA(Ile)-lysidine synthase (317 aa).

Residue 30–35 coordinates ATP; the sequence is SGGSDS.

Belongs to the tRNA(Ile)-lysidine synthase family.

It is found in the cytoplasm. The enzyme catalyses cytidine(34) in tRNA(Ile2) + L-lysine + ATP = lysidine(34) in tRNA(Ile2) + AMP + diphosphate + H(+). Ligates lysine onto the cytidine present at position 34 of the AUA codon-specific tRNA(Ile) that contains the anticodon CAU, in an ATP-dependent manner. Cytidine is converted to lysidine, thus changing the amino acid specificity of the tRNA from methionine to isoleucine. The sequence is that of tRNA(Ile)-lysidine synthase from Chlamydia caviae (strain ATCC VR-813 / DSM 19441 / 03DC25 / GPIC) (Chlamydophila caviae).